The primary structure comprises 149 residues: MDLILLQKVTNLGNLGDKVSVKPGYGRNFLVPQGKAVPATAANVEAFETKRAEYEAKANSILAEAQSRATKFEGASVTIGAHASTEGKLYGSVGPRDIAEAFTAAGLPLEKSEVILGEGAFRNVGEYDVVLHLHADVETTVKVIVESDA.

This sequence belongs to the bacterial ribosomal protein bL9 family.

In terms of biological role, binds to the 23S rRNA. The polypeptide is Large ribosomal subunit protein bL9 (Xanthomonas axonopodis pv. citri (strain 306)).